A 142-amino-acid polypeptide reads, in one-letter code: MFDFGFSELVVIGVVMLIVVGPERLPKVARTAGHLLGRLQRYVSDVKSDIQREMQLEELKKLQQQVQQQAQALESSVRTEVAQVESSVDQVVAAIKADAAPPDNTTSAESQAAADPAAVDSSQQLELRLDTTPKQVVGSDKA.

A helical transmembrane segment spans residues 1–21 (MFDFGFSELVVIGVVMLIVVG). The disordered stretch occupies residues 99-142 (AAPPDNTTSAESQAAADPAAVDSSQQLELRLDTTPKQVVGSDKA). The span at 107-124 (SAESQAAADPAAVDSSQQ) shows a compositional bias: low complexity.

It belongs to the TatB family. As to quaternary structure, the Tat system comprises two distinct complexes: a TatABC complex, containing multiple copies of TatA, TatB and TatC subunits, and a separate TatA complex, containing only TatA subunits. Substrates initially bind to the TatABC complex, which probably triggers association of the separate TatA complex to form the active translocon.

The protein localises to the cell inner membrane. In terms of biological role, part of the twin-arginine translocation (Tat) system that transports large folded proteins containing a characteristic twin-arginine motif in their signal peptide across membranes. Together with TatC, TatB is part of a receptor directly interacting with Tat signal peptides. TatB may form an oligomeric binding site that transiently accommodates folded Tat precursor proteins before their translocation. The sequence is that of Sec-independent protein translocase protein TatB from Azoarcus sp. (strain BH72).